A 249-amino-acid chain; its full sequence is Homeobox protein TGIF2LX (249 aa).

Positions 1 to 27 (MEAAADRPAETRSRVEKDSRRAKKDSP) are enriched in basic and acidic residues. 2 disordered regions span residues 1-60 (MEAA…KKKR) and 121-215 (QRRG…EPVS). Over residues 28 to 46 (AKTQSPAQDTSIMLRSNAD) the composition is skewed to polar residues. Positions 55 to 118 (EHKKKRKGYL…INARRRILPD (64 aa)) form a DNA-binding region, homeobox; TALE-type. The span at 159 to 172 (DNVQSLPLRSSPKG) shows a compositional bias: polar residues. Low complexity predominate over residues 202-215 (VSNITSSSSPEPVS).

It belongs to the TALE/TGIF homeobox family.

It localises to the nucleus. May have a transcription role in testis. This chain is Homeobox protein TGIF2LX (TGIF2LX), found in Miopithecus talapoin (Angolan talapoin).